The sequence spans 485 residues: E3 ubiquitin-protein ligase TRIM68 (485 aa).

An RING-type zinc finger spans residues 16-61 (CPICMTFLREPVSISCGHTFCHSCLSGLWKLPGESQNLSYTCPLCR). The B box-type zinc finger occupies 93–134 (LKTDVCDLHKEQLTMFCKEDDMVTCEACKQSPEHEAHSVVPI). The Zn(2+) site is built by C98, H101, C120, and H126. Residues 144–226 (KLQQALEHLR…EQEKGETASK (83 aa)) adopt a coiled-coil conformation. A B30.2/SPRY domain is found at 285-483 (LKTDCRVLGL…TPLTICTLGG (199 aa)).

The protein belongs to the TRIM/RBCC family. As to quaternary structure, interacts with AR/androgen receptor (via ligand-binding domain). Interacts with KAT5/TIP60. In terms of processing, auto-ubiquitinated.

The protein resides in the cytoplasm. Its subcellular location is the perinuclear region. It is found in the nucleus. It catalyses the reaction S-ubiquitinyl-[E2 ubiquitin-conjugating enzyme]-L-cysteine + [acceptor protein]-L-lysine = [E2 ubiquitin-conjugating enzyme]-L-cysteine + N(6)-ubiquitinyl-[acceptor protein]-L-lysine.. The protein operates within protein modification; protein ubiquitination. Functionally, functions as a ubiquitin E3 ligase. Acts as a coactivator of androgen receptor (AR) depending on its ubiquitin ligase activity. The polypeptide is E3 ubiquitin-protein ligase TRIM68 (Trim68) (Mus musculus (Mouse)).